The chain runs to 362 residues: Peptide chain release factor 1 (362 aa).

N5-methylglutamine is present on Gln-237.

Belongs to the prokaryotic/mitochondrial release factor family. Post-translationally, methylated by PrmC. Methylation increases the termination efficiency of RF1.

The protein localises to the cytoplasm. Functionally, peptide chain release factor 1 directs the termination of translation in response to the peptide chain termination codons UAG and UAA. The chain is Peptide chain release factor 1 from Vibrio parahaemolyticus serotype O3:K6 (strain RIMD 2210633).